Reading from the N-terminus, the 198-residue chain is Probable GTP-binding protein EngB (198 aa).

The region spanning 36–198 (SDPQFAFIGR…NLSKLQELLE (163 aa)) is the EngB-type G domain. GTP is bound by residues 44–51 (GRSNVGKS), 70–74 (GRTQL), 88–91 (DLPG), 155–158 (NKID), and 182–184 (ISA). The Mg(2+) site is built by Ser51 and Thr72.

Belongs to the TRAFAC class TrmE-Era-EngA-EngB-Septin-like GTPase superfamily. EngB GTPase family. It depends on Mg(2+) as a cofactor.

Necessary for normal cell division and for the maintenance of normal septation. The sequence is that of Probable GTP-binding protein EngB from Mesomycoplasma hyopneumoniae (strain 7448) (Mycoplasma hyopneumoniae).